The chain runs to 442 residues: MTQIAIQPAIRRRHQPWYKILYVQVLIAIVLGVLIGYFYPDFGKELKPLGDGFIALIKMMIAPVIFCTVVHGISSMGDLKRVGRVGLKSLIYFESVSTVALAVGLLVGEVLQPGHGFNIDPATIDPKSVATYVTKAKEEGIVAHLMAIIPDSYVGAIARGDLLQVLLISILSGFAIAFLGKAGEPIADAIDKAAKMFFGIIRIIVRVAPVGAFGAMAFTVGAYGLGSLLNLAALIGTFYLTSILFVLIVLGAIARLAGFSILRFIAYIKDELLIVLGTSSSETVLPQMIQKMEHLGASRSVVGLVIPTGYSFNLDGTNIYMTLATLFLAQATNTHLTIWQELGILGIAMITSKGASGVTGAGFITLAATLSIVPDIPIQSIAILVGIDKFMSECRALTNLIGNGVACVVISISEGELDRDALHETMAHPLEIGEALEPGGGA.

6 helical membrane passes run 20–40, 53–73, 90–110, 160–180, 209–229, and 233–253; these read ILYVQVLIAIVLGVLIGYFYP, FIALIKMMIAPVIFCTVVHGI, LIYFESVSTVALAVGLLVGEV, GDLLQVLLISILSGFAIAFLG, PVGAFGAMAFTVGAYGLGSLL, and ALIGTFYLTSILFVLIVLGAI.

This sequence belongs to the dicarboxylate/amino acid:cation symporter (DAACS) (TC 2.A.23) family.

The protein resides in the cell inner membrane. In terms of biological role, responsible for the transport of dicarboxylates such as succinate, fumarate, and malate from the periplasm across the membrane. The polypeptide is C4-dicarboxylate transport protein 4 (Bradyrhizobium diazoefficiens (strain JCM 10833 / BCRC 13528 / IAM 13628 / NBRC 14792 / USDA 110)).